The primary structure comprises 33 residues: Photosystem II reaction center protein Psb30 (33 aa).

The helical transmembrane segment at 5-25 (VVVQLGSLSLIVLAGPIIVLL) threads the bilayer.

Belongs to the Psb30/Ycf12 family. In terms of assembly, PSII is composed of 1 copy each of membrane proteins PsbA, PsbB, PsbC, PsbD, PsbE, PsbF, PsbH, PsbI, PsbJ, PsbK, PsbL, PsbM, PsbT, PsbX, PsbY, PsbZ, Psb30/Ycf12, peripheral proteins of the oxygen-evolving complex and a large number of cofactors. It forms dimeric complexes.

The protein localises to the plastid. It is found in the chloroplast thylakoid membrane. A core subunit of photosystem II (PSII), probably helps stabilize the reaction center. In Mesostigma viride (Green alga), this protein is Photosystem II reaction center protein Psb30.